A 301-amino-acid chain; its full sequence is Protoheme IX farnesyltransferase 1 (301 aa).

9 helical membrane-spanning segments follow: residues 29–49 (VVALMLLTVLVGMCLAVPHAV), 51–71 (VQPLLAGMLGIAMMAGSAAAL), 101–121 (ALIFAASLGSLGFIVLYSLVN), 123–143 (LTAWLTFASLIGYALVYTAYL), 150–170 (NIVIGGLAGAMPPLLGWTAVT), 177–197 (ALLLVIIIFTWTPPHFWALAI), 223–243 (CILLYTVLLAIACLLPVLVGM), 244–264 (CGPVYFVCSSLLSTGFIYKAW), and 274–294 (LAMQVFRFSIYHLMLLFMALL).

This sequence belongs to the UbiA prenyltransferase family. Protoheme IX farnesyltransferase subfamily.

The protein resides in the cell inner membrane. It catalyses the reaction heme b + (2E,6E)-farnesyl diphosphate + H2O = Fe(II)-heme o + diphosphate. Its pathway is porphyrin-containing compound metabolism; heme O biosynthesis; heme O from protoheme: step 1/1. In terms of biological role, converts heme B (protoheme IX) to heme O by substitution of the vinyl group on carbon 2 of heme B porphyrin ring with a hydroxyethyl farnesyl side group. In Shewanella baltica (strain OS195), this protein is Protoheme IX farnesyltransferase 1.